Consider the following 583-residue polypeptide: Cysteine/serine-rich nuclear protein 1 (583 aa).

Disordered regions lie at residues 1–79 (MTGL…APRE) and 306–381 (AESL…RSGV). A compositionally biased stretch (low complexity) spans 18-41 (SSSSSSSFSSRLSLSSFPASSASP). A compositionally biased stretch (polar residues) spans 54–69 (APQSDQDSCGLQSFTP). Residues 335 to 361 (PVSSELGDSSCSSDMTDSSTTLSSGSS) show a composition bias toward low complexity. Pro residues predominate over residues 364-373 (PNHPAHPSLP).

The protein belongs to the AXUD1 family. Widely expressed with highest levels in thymus and lung. Low levels detected in naive T-cells.

The protein localises to the nucleus. In terms of biological role, binds to the consensus sequence 5'-AGAGTG-3' and has transcriptional activator activity. May have a tumor-suppressor function. May play a role in apoptosis. The sequence is that of Cysteine/serine-rich nuclear protein 1 (Csrnp1) from Mus musculus (Mouse).